The chain runs to 431 residues: Tol-Pal system protein TolB (431 aa).

The N-terminal stretch at 1 to 26 (MSLMTKLGFRALVASCLITAGSAANA) is a signal peptide. The interval 406 to 431 (DGSAPPQILSVQGGSVREPSWGPFMQ) is disordered.

It belongs to the TolB family. The Tol-Pal system is composed of five core proteins: the inner membrane proteins TolA, TolQ and TolR, the periplasmic protein TolB and the outer membrane protein Pal. They form a network linking the inner and outer membranes and the peptidoglycan layer.

It localises to the periplasm. In terms of biological role, part of the Tol-Pal system, which plays a role in outer membrane invagination during cell division and is important for maintaining outer membrane integrity. In Burkholderia orbicola (strain MC0-3), this protein is Tol-Pal system protein TolB.